The primary structure comprises 107 residues: Replication initiation control protein YabA (107 aa).

Zn(2+)-binding residues include His-81, Cys-83, Cys-97, and Cys-100.

Belongs to the YabA family. Homotetramer. Interacts with both DnaA and DnaN, acting as a bridge between these two proteins. The cofactor is Zn(2+).

It is found in the cytoplasm. It localises to the nucleoid. In terms of biological role, involved in control of chromosome replication initiation. Inhibits the cooperative binding of DnaA to the oriC region, thus negatively regulating initiation of chromosome replication. Inhibits the ability of DnaA-ATP to form a helix on DNA; does not disassemble preformed DnaA-DNA helices. Decreases the residence time of DnaA on the chromosome at its binding sites (oriC, replication forks and promoter-binding sites). Tethers DnaA to the replication machinery via the DNA polymerase beta sliding clamp subunit (dnaN). Associates with oriC and other DnaA targets on the chromosome in a DnaA-dependent manner. The sequence is that of Replication initiation control protein YabA from Streptococcus equi subsp. zooepidemicus (strain MGCS10565).